The following is a 270-amino-acid chain: Non-structural maintenance of chromosomes element 1 homolog (270 aa).

An RING-type; atypical zinc finger spans residues 185-226 (CNVCRKVAIQSQLCENCGIPLHLQCAGKYFHGKANPTCPNCN). The segment at 236–270 (LNQVSSQGPSHSQTETVRGRNQRSKNTSTASRTSR) is disordered. 2 stretches are compositionally biased toward polar residues: residues 237-251 (NQVS…QTET) and 259-270 (SKNTSTASRTSR).

It belongs to the NSE1 family. In terms of assembly, component of the SMC5-SMC6 complex.

It is found in the nucleus. The protein localises to the chromosome. It localises to the telomere. It carries out the reaction S-ubiquitinyl-[E2 ubiquitin-conjugating enzyme]-L-cysteine + [acceptor protein]-L-lysine = [E2 ubiquitin-conjugating enzyme]-L-cysteine + N(6)-ubiquitinyl-[acceptor protein]-L-lysine.. Functionally, RING-type zinc finger-containing E3 ubiquitin ligase that assembles with melanoma antigen protein (MAGE) to catalyze the direct transfer of ubiquitin from E2 ubiquitin-conjugating enzyme to a specific substrate. Within MAGE-RING ubiquitin ligase complex, MAGE stimulates and specifies ubiquitin ligase activity likely through recruitment and/or stabilization of the E2 ubiquitin-conjugating enzyme at the E3:substrate complex. Involved in maintenance of genome integrity, DNA damage response and DNA repair. The protein is Non-structural maintenance of chromosomes element 1 homolog (nsmce1) of Xenopus laevis (African clawed frog).